A 432-amino-acid chain; its full sequence is Transcobalamin-2 (432 aa).

A signal peptide spans 1 to 18; that stretch reads MGHLGALLFLLGGLGALA. 3 disulfides stabilise this stretch: C21-C270, C116-C312, and C165-C208. N-linked (GlcNAc...) asparagine glycosylation occurs at N94. Cob(II)alamin contacts are provided by residues Q104, 152 to 156, H193, 193 to 197, N245, S248, Q294, and 400 to 402; these read TSYYQ, HVSVD, and WQV.

It belongs to the eukaryotic cobalamin transport proteins family. Interacts with CD320 (via LDL-receptor class A domains). In terms of tissue distribution, expressed in mammary gland, kidney, lymphatic nodes and liver.

It is found in the secreted. Functionally, primary vitamin B12-binding and transport protein. Delivers cobalamin to cells. The sequence is that of Transcobalamin-2 (TCN2) from Bos taurus (Bovine).